We begin with the raw amino-acid sequence, 606 residues long: Pyruvate decarboxylase 2 (606 aa).

2 residues coordinate substrate: Asp68 and His155. The interval 433–515 is thiamine pyrophosphate binding; sequence DSWFNCQKLK…FLINNGGYTI (83 aa). Residues Asp483, Asn510, and Gly512 each contribute to the Mg(2+) site. Substrate is bound at residue Glu516.

This sequence belongs to the TPP enzyme family. In terms of assembly, homotetramer. Requires a metal cation as cofactor. The cofactor is thiamine diphosphate.

It carries out the reaction a 2-oxocarboxylate + H(+) = an aldehyde + CO2. The polypeptide is Pyruvate decarboxylase 2 (PDC2) (Oryza sativa subsp. indica (Rice)).